The chain runs to 336 residues: Atypical chemokine receptor 1 (336 aa).

Topologically, residues 1–63 are extracellular; sequence MGNCLHTAEL…CNLLDDSALP (63 aa). Residues Asn16, Asn27, and Asn33 are each glycosylated (N-linked (GlcNAc...) asparagine). 2 disulfides stabilise this stretch: Cys51–Cys276 and Cys129–Cys195. Residues 64-84 form a helical membrane-spanning segment; that stretch reads FFILTSVLGILASSTVLFILF. Over 85 to 95 the chain is Cytoplasmic; sequence RPLFRWQLCPG. Residues 96–116 form a helical membrane-spanning segment; sequence WPVLAQLAVGSALFSIVVPIL. Topologically, residues 117–129 are extracellular; it reads APGLGSTHSSALC. The helical transmembrane segment at 130-153 threads the bilayer; it reads SLGYCVWYGSAFAQALLLGCHASL. Residues 154 to 166 are Cytoplasmic-facing; that stretch reads GHRLGAGQVPGLT. A helical membrane pass occupies residues 167 to 187; it reads LGLTVGIWGVAALLTLPVTLA. The Extracellular segment spans residues 188–207; it reads SGASGGLCTPIHSTELKALQ. A helical membrane pass occupies residues 208-228; that stretch reads ATHTVACLAIFVLLPLGLFGA. The Cytoplasmic segment spans residues 229–244; it reads KGLKKALGMGPGPWMN. Residues 245–265 traverse the membrane as a helical segment; it reads ILWAWFIFWWPHGVVLGLDFL. Over 266 to 287 the chain is Extracellular; it reads VRSKLLLLSTCLAQQALDLLLN. Residues 288-308 form a helical membrane-spanning segment; sequence LAEALAILHCVATPLILALFY. Residues 309-336 are Cytoplasmic-facing; the sequence is HQATRTLLPSLPLPEGWSSHLDTLGSKS.

Belongs to the G-protein coupled receptor 1 family. Atypical chemokine receptor subfamily.

The protein resides in the early endosome. The protein localises to the recycling endosome. It localises to the membrane. Functionally, atypical chemokine receptor that controls chemokine levels and localization via high-affinity chemokine binding that is uncoupled from classic ligand-driven signal transduction cascades, resulting instead in chemokine sequestration, degradation, or transcytosis. Also known as interceptor (internalizing receptor) or chemokine-scavenging receptor or chemokine decoy receptor. Has a promiscuous chemokine-binding profile, interacting with inflammatory chemokines of both the CXC and the CC subfamilies but not with homeostatic chemokines. Acts as a receptor for chemokines including CCL2, CCL5, CCL7, CCL11, CCL13, CCL14, CCL17, CXCL5, CXCL6, IL8/CXCL8, CXCL11, GRO, RANTES, MCP-1 and TARC. May regulate chemokine bioavailability and, consequently, leukocyte recruitment through two distinct mechanisms: when expressed in endothelial cells, it sustains the abluminal to luminal transcytosis of tissue-derived chemokines and their subsequent presentation to circulating leukocytes; when expressed in erythrocytes, serves as blood reservoir of cognate chemokines but also as a chemokine sink, buffering potential surges in plasma chemokine levels. This chain is Atypical chemokine receptor 1 (ACKR1), found in Gorilla gorilla gorilla (Western lowland gorilla).